A 714-amino-acid chain; its full sequence is Fatty acid oxidation complex subunit alpha (714 aa).

The enoyl-CoA hydratase stretch occupies residues 1 to 190; sequence MEMASAFTLN…KLGLVDDVVP (190 aa). Residues 306–714 are 3-hydroxyacyl-CoA dehydrogenase; the sequence is APLNSVGILG…FWKTTATDLQ (409 aa).

This sequence in the N-terminal section; belongs to the enoyl-CoA hydratase/isomerase family. It in the central section; belongs to the 3-hydroxyacyl-CoA dehydrogenase family. Heterotetramer of two alpha chains (FadJ) and two beta chains (FadI).

It localises to the cytoplasm. The catalysed reaction is a (3S)-3-hydroxyacyl-CoA = a (2E)-enoyl-CoA + H2O. The enzyme catalyses a 4-saturated-(3S)-3-hydroxyacyl-CoA = a (3E)-enoyl-CoA + H2O. It carries out the reaction a (3S)-3-hydroxyacyl-CoA + NAD(+) = a 3-oxoacyl-CoA + NADH + H(+). It catalyses the reaction (3S)-3-hydroxybutanoyl-CoA = (3R)-3-hydroxybutanoyl-CoA. Its pathway is lipid metabolism; fatty acid beta-oxidation. Functionally, catalyzes the formation of a hydroxyacyl-CoA by addition of water on enoyl-CoA. Also exhibits 3-hydroxyacyl-CoA epimerase and 3-hydroxyacyl-CoA dehydrogenase activities. In Shigella flexneri, this protein is Fatty acid oxidation complex subunit alpha.